We begin with the raw amino-acid sequence, 1435 residues long: Guanine nucleotide exchange factor LTE1 (1435 aa).

The N-terminal Ras-GEF domain occupies 25–157; the sequence is VSKPVNSADL…SCIINLKKNW (133 aa). The segment at 235–256 is disordered; the sequence is KLQSSNSSKNQRSPSMLLFPDN. The segment covering 237–249 has biased composition (low complexity); the sequence is QSSNSSKNQRSPS. Serine 271 carries the phosphoserine modification. The segment at 338-365 is disordered; that stretch reads QSGTLQGTSTTSSLDNNSNSNSRSNTSS. Serine 559 carries the phosphoserine modification. Basic and acidic residues predominate over residues 582–606; the sequence is KDNSSSRTDENGPQRLLFHETDKTN. Positions 582–689 are disordered; sequence KDNSSSRTDE…VRNIVNNTDS (108 aa). Residues 621-632 show a composition bias toward polar residues; it reads SQSQKSMTSSPL. Residues 654–667 are compositionally biased toward low complexity; the sequence is SITYSYDSELSSSS. Serine 689 carries the post-translational modification Phosphoserine. Residue threonine 691 is modified to Phosphothreonine. A compositionally biased stretch (basic and acidic residues) spans 723–744; that stretch reads EKNYDNKENQESEYESTKKLDN. Positions 723–747 are disordered; that stretch reads EKNYDNKENQESEYESTKKLDNSLD. A phosphoserine mark is found at serine 808 and serine 810. The segment at 851 to 871 is disordered; that stretch reads AQNSPLKQTQNPQREFPNGTS. Serine 1028 and serine 1109 each carry phosphoserine. The Ras-GEF domain occupies 1194-1434; it reads DSLSVAQQMT…LTQEEINELS (241 aa).

Belongs to the LTE1 family. Interacts with CDC24, CDC42, KEL1, KEL2, RAS2 and TEM1. Post-translationally, phosphorylated by CDC28 in a cell cycle-dependent manner and in response to nocodazole. Dephosphorylion by CDC14 triggers LTE1 release from bud cortex during the exit of mitosis.

It is found in the cytoplasm. It localises to the bud. GDP-GTP exchange factor for TEM1, a Ras-like protein, component of the mitotic exit network (MEN). Activation of TEM1 by LTE1 in the bud ultimately leads to activation of CDC15 followed by the release of CDC14 from the nucleolus, which then inactivates cyclin-dependent kinases (CDKs) activity by several mechanism. Required for TEM1 localization to the bud cortex during mitotic exit. Fine-tunes the timing of the mitotic exit and couples this event with cytokinesis. In terms of biological role, involved in proprotein-processing like proalpha factor-processing in the secretory pathway. This chain is Guanine nucleotide exchange factor LTE1 (LTE1), found in Saccharomyces cerevisiae (strain ATCC 204508 / S288c) (Baker's yeast).